Consider the following 100-residue polypeptide: Signal recognition particle 19 kDa protein (100 aa).

It belongs to the SRP19 family. Part of the signal recognition particle protein translocation system, which is composed of SRP and FtsY. Archaeal SRP consists of a 7S RNA molecule of 300 nucleotides and two protein subunits: SRP54 and SRP19.

It is found in the cytoplasm. In terms of biological role, involved in targeting and insertion of nascent membrane proteins into the cytoplasmic membrane. Binds directly to 7S RNA and mediates binding of the 54 kDa subunit of the SRP. In Pyrococcus furiosus (strain ATCC 43587 / DSM 3638 / JCM 8422 / Vc1), this protein is Signal recognition particle 19 kDa protein.